Reading from the N-terminus, the 297-residue chain is Large ribosomal subunit protein uL18 (297 aa).

An N-acetylglycine modification is found at glycine 2. N6-acetyllysine occurs at positions 5 and 48. A Phosphoserine modification is found at serine 185. Lysine 220 is subject to N6-acetyllysine; alternate. Residue lysine 220 forms a Glycyl lysine isopeptide (Lys-Gly) (interchain with G-Cter in SUMO1); alternate linkage. A Glycyl lysine isopeptide (Lys-Gly) (interchain with G-Cter in SUMO2); alternate cross-link involves residue lysine 220. Threonine 232 bears the Phosphothreonine mark. The tract at residues 253–297 is disordered; that stretch reads YEKKPKREVKKKRWNRPKMSLAQKKDRVAQKKASFLRAQERAAES. A compositionally biased stretch (basic residues) spans 258-268; it reads KREVKKKRWNR. Serine 272 is modified (phosphoserine).

The protein belongs to the universal ribosomal protein uL18 family. In terms of assembly, component of the large ribosomal subunit (LSU). Part of the 5S RNP complex, which is a LSU subcomplex composed of the 5S RNA, RPL5 and RPL11. Component of a hexameric 5S RNP precursor complex, composed of 5S RNA, RRS1, RPF2/BXDC1, RPL5, RPL11 and HEATR3; this complex acts as a precursor for ribosome assembly. Interacts with NVL in an ATP-dependent manner. Interacts with RRP1B. Interacts with IPO5, IPO7 and KPNB1; these interactions may be involved in RPL5 nuclear import for the assembly of ribosomal subunits. Interacts with RRP1B.

It localises to the cytoplasm. The protein resides in the nucleus. The protein localises to the nucleolus. Component of the ribosome, a large ribonucleoprotein complex responsible for the synthesis of proteins in the cell. The small ribosomal subunit (SSU) binds messenger RNAs (mRNAs) and translates the encoded message by selecting cognate aminoacyl-transfer RNA (tRNA) molecules. The large subunit (LSU) contains the ribosomal catalytic site termed the peptidyl transferase center (PTC), which catalyzes the formation of peptide bonds, thereby polymerizing the amino acids delivered by tRNAs into a polypeptide chain. The nascent polypeptides leave the ribosome through a tunnel in the LSU and interact with protein factors that function in enzymatic processing, targeting, and the membrane insertion of nascent chains at the exit of the ribosomal tunnel. As part of the 5S RNP/5S ribonucleoprotein particle it is an essential component of the LSU, required for its formation and the maturation of rRNAs. It also couples ribosome biogenesis to p53/TP53 activation. As part of the 5S RNP it accumulates in the nucleoplasm and inhibits MDM2, when ribosome biogenesis is perturbed, mediating the stabilization and the activation of TP53. In Rattus norvegicus (Rat), this protein is Large ribosomal subunit protein uL18 (Rpl5).